The sequence spans 304 residues: Plasmodesmata-located protein 3 (304 aa).

Residues 1-26 form the signal peptide; that stretch reads MGFYSLKQLLLLYIIIMALFSDLKLA. The Extracellular segment spans residues 27–272; that stretch reads KSSSPEYTNL…SSSSGTTGKT (246 aa). Gnk2-homologous domains follow at residues 34 to 138 and 143 to 242; these read TNLI…ISGF and GMEL…FYPN. 6 disulfides stabilise this stretch: cysteine 41–cysteine 116, cysteine 92–cysteine 101, cysteine 104–cysteine 129, cysteine 151–cysteine 220, cysteine 196–cysteine 205, and cysteine 208–cysteine 233. A helical transmembrane segment spans residues 273-293; the sequence is VAIIVGGTAGVGFLVICLLFV. A necessary and sufficient for plasmodesmal targeting region spans residues 273–293; that stretch reads VAIIVGGTAGVGFLVICLLFV. Residues 294–304 are Cytoplasmic-facing; the sequence is KNLMKKKYDDY.

Belongs to the cysteine-rich repeat secretory protein family. Plasmodesmata-located proteins (PDLD) subfamily. As to quaternary structure, (Microbial infection) Interacts with Grapevine fanleaf virus (GFLV) 2B-MP. In terms of tissue distribution, highly expressed in inflorescence pedacel and shoot apex. Expressed in the outermost L1 layer of the shoot apical meristem and in the epidermis of bulging floral primordia. Within the L1, expression was restricted to the peripheral zone (at protein level).

It localises to the cell membrane. The protein resides in the cell junction. It is found in the plasmodesma. Modulates cell-to-cell trafficking. The polypeptide is Plasmodesmata-located protein 3 (Arabidopsis thaliana (Mouse-ear cress)).